Reading from the N-terminus, the 192-residue chain is E3 ubiquitin-protein ligase RNF185 (192 aa).

Positions 1 to 13 (MASKGPSASASTE) are enriched in polar residues. The disordered stretch occupies residues 1–30 (MASKGPSASASTENSNAGGPSGSSNGTGES). Residues 1–130 (MASKGPSASA…GGFQGFGFGD (130 aa)) are Cytoplasmic-facing. The segment covering 14-27 (NSNAGGPSGSSNGT) has biased composition (low complexity). A required for ubiquitin ligase activity and protection against ER stress-induced cell death region spans residues 29 to 80 (ESGGQDSTFECNICLDTAKDAVISLCGHLFCWPCLHQWLETRPNRQVCPVCK). The RING-type zinc finger occupies 39–80 (CNICLDTAKDAVISLCGHLFCWPCLHQWLETRPNRQVCPVCK). The disordered stretch occupies residues 90 to 123 (PLYGRGSTGQQDPREKTPPRPQGQRPEPENRGGF). The chain crosses the membrane as a helical span at residues 131–151 (GGFQMSFGIGAFPFGIFATAF). Topologically, residues 152–171 (NINDGRPPPAVPGTPQYVDE) are mitochondrial intermembrane. Residues 172 to 192 (QFLSRLFLFVALVIMFWLLIA) traverse the membrane as a helical segment.

Interacts with ATG5 and BNIP1. As to expression, ubiquitously expressed with high expression in testis.

The protein localises to the mitochondrion outer membrane. It is found in the endoplasmic reticulum membrane. It carries out the reaction S-ubiquitinyl-[E2 ubiquitin-conjugating enzyme]-L-cysteine + [acceptor protein]-L-lysine = [E2 ubiquitin-conjugating enzyme]-L-cysteine + N(6)-ubiquitinyl-[acceptor protein]-L-lysine.. The protein operates within protein modification; protein ubiquitination. Its function is as follows. E3 ubiquitin-protein ligase that regulates selective mitochondrial autophagy by mediating 'Lys-63'-linked polyubiquitination of BNIP1. Acts in the endoplasmic reticulum (ER)-associated degradation (ERAD) pathway, which targets misfolded proteins that accumulate in the endoplasmic reticulum (ER) for ubiquitination and subsequent proteasome-mediated degradation. Protects cells from ER stress-induced apoptosis. Responsible for the cotranslational ubiquitination and degradation of CFTR in the ERAD pathway. Also acts as a regulator of the innate antiviral response by catalyzing 'Lys-27'-linked polyubiquitination of CGAS, thereby promoting CGAS cyclic GMP-AMP synthase activity. Preferentially associates with the E2 enzymes UBE2J1 and UBE2J2. The protein is E3 ubiquitin-protein ligase RNF185 (Rnf185) of Mus musculus (Mouse).